Consider the following 64-residue polypeptide: Large ribosomal subunit protein bL35 (64 aa).

The disordered stretch occupies residues 27-47 (MNGSHNLEKKNRKRSRRLHQA). The segment covering 36–45 (KNRKRSRRLH) has biased composition (basic residues).

This sequence belongs to the bacterial ribosomal protein bL35 family.

The sequence is that of Large ribosomal subunit protein bL35 from Chlorobium phaeobacteroides (strain DSM 266 / SMG 266 / 2430).